The chain runs to 512 residues: 2,3-bisphosphoglycerate-independent phosphoglycerate mutase (512 aa).

Positions 12 and 62 each coordinate Mn(2+). The Phosphoserine intermediate role is filled by Ser-62. Residues His-123, 153–154 (RD), Arg-185, Arg-191, 260–263 (RPDR), and Lys-333 each bind substrate. Mn(2+) is bound by residues Asp-400, His-404, Asp-441, His-442, and His-460.

Belongs to the BPG-independent phosphoglycerate mutase family. In terms of assembly, monomer. It depends on Mn(2+) as a cofactor.

The catalysed reaction is (2R)-2-phosphoglycerate = (2R)-3-phosphoglycerate. It functions in the pathway carbohydrate degradation; glycolysis; pyruvate from D-glyceraldehyde 3-phosphate: step 3/5. Catalyzes the interconversion of 2-phosphoglycerate and 3-phosphoglycerate. In Clostridium beijerinckii (strain ATCC 51743 / NCIMB 8052) (Clostridium acetobutylicum), this protein is 2,3-bisphosphoglycerate-independent phosphoglycerate mutase.